Consider the following 362-residue polypeptide: Cobalt-precorrin-5B C(1)-methyltransferase (362 aa).

Belongs to the CbiD family.

It catalyses the reaction Co-precorrin-5B + S-adenosyl-L-methionine = Co-precorrin-6A + S-adenosyl-L-homocysteine. It participates in cofactor biosynthesis; adenosylcobalamin biosynthesis; cob(II)yrinate a,c-diamide from sirohydrochlorin (anaerobic route): step 6/10. In terms of biological role, catalyzes the methylation of C-1 in cobalt-precorrin-5B to form cobalt-precorrin-6A. The polypeptide is Cobalt-precorrin-5B C(1)-methyltransferase (Burkholderia multivorans (strain ATCC 17616 / 249)).